The sequence spans 377 residues: MREKVVSLAQDLIRRPSISPNDEGCQQIIAERLEKLGFQIEWMPFNDTLNLWAKHGTSEPVIAFAGHTDVVPTGDENQWSSPPFSAEIIDGMLYGRGAADMKGSLAAMIVAAEEYVKANPNHKGTIALLITSDEEAAAKDGTIRVVETLMARDEKITYCMVGEPSSAKNLGDVVKNGRRGSITGNLYIKGIQGHVAYPHLAENPIHKAAPFLQELTTYQWDKGNEFFPPTSLQIANIHAGTGSNNVIPAELYIQFNLRYCTEVTDEIIKQKVAEMLEKHNLKYRIEWNLSGKPFLTKPGKLLDSITSAIEETIGITPKAETGGGTSDGRFIALMGAEVVEFGPLNSTIHKVNECVSIEDLGKCGEIYHKMLVNLLDS.

His67 contacts Zn(2+). Residue Asp69 is part of the active site. Asp100 lines the Zn(2+) pocket. The active-site Proton acceptor is the Glu134. Residues Glu135, Glu163, and His349 each contribute to the Zn(2+) site.

Belongs to the peptidase M20A family. DapE subfamily. As to quaternary structure, homodimer. Zn(2+) serves as cofactor. The cofactor is Co(2+).

It carries out the reaction N-succinyl-(2S,6S)-2,6-diaminopimelate + H2O = (2S,6S)-2,6-diaminopimelate + succinate. It functions in the pathway amino-acid biosynthesis; L-lysine biosynthesis via DAP pathway; LL-2,6-diaminopimelate from (S)-tetrahydrodipicolinate (succinylase route): step 3/3. In terms of biological role, catalyzes the hydrolysis of N-succinyl-L,L-diaminopimelic acid (SDAP), forming succinate and LL-2,6-diaminopimelate (DAP), an intermediate involved in the bacterial biosynthesis of lysine and meso-diaminopimelic acid, an essential component of bacterial cell walls. This chain is Succinyl-diaminopimelate desuccinylase, found in Haemophilus influenzae (strain 86-028NP).